We begin with the raw amino-acid sequence, 110 residues long: UPF0060 membrane protein BTH_I2792 (110 aa).

4 helical membrane passes run 9-29, 34-54, 64-84, and 86-106; these read ALFV…WLVL, PVWL…LLTL, AAYG…VDGV, and LSRW…VIAL.

This sequence belongs to the UPF0060 family.

The protein localises to the cell inner membrane. The polypeptide is UPF0060 membrane protein BTH_I2792 (Burkholderia thailandensis (strain ATCC 700388 / DSM 13276 / CCUG 48851 / CIP 106301 / E264)).